A 262-amino-acid polypeptide reads, in one-letter code: ATP synthase subunit delta (262 aa).

It belongs to the ATPase delta chain family. In terms of assembly, F-type ATPases have 2 components, F(1) - the catalytic core - and F(0) - the membrane proton channel. F(1) has five subunits: alpha(3), beta(3), gamma(1), delta(1), epsilon(1). F(0) has three main subunits: a(1), b(2) and c(10-14). The alpha and beta chains form an alternating ring which encloses part of the gamma chain. F(1) is attached to F(0) by a central stalk formed by the gamma and epsilon chains, while a peripheral stalk is formed by the delta and b chains.

The protein localises to the cell membrane. F(1)F(0) ATP synthase produces ATP from ADP in the presence of a proton or sodium gradient. F-type ATPases consist of two structural domains, F(1) containing the extramembraneous catalytic core and F(0) containing the membrane proton channel, linked together by a central stalk and a peripheral stalk. During catalysis, ATP synthesis in the catalytic domain of F(1) is coupled via a rotary mechanism of the central stalk subunits to proton translocation. In terms of biological role, this protein is part of the stalk that links CF(0) to CF(1). It either transmits conformational changes from CF(0) to CF(1) or is implicated in proton conduction. This Tropheryma whipplei (strain TW08/27) (Whipple's bacillus) protein is ATP synthase subunit delta.